The primary structure comprises 273 residues: 3-methyl-2-oxobutanoate hydroxymethyltransferase (273 aa).

Mg(2+) is bound by residues aspartate 53 and aspartate 92. 3-methyl-2-oxobutanoate contacts are provided by residues 53–54 (DS), aspartate 92, and lysine 122. Glutamate 124 provides a ligand contact to Mg(2+). Glutamate 191 serves as the catalytic Proton acceptor.

The protein belongs to the PanB family. As to quaternary structure, homodecamer; pentamer of dimers. It depends on Mg(2+) as a cofactor.

It is found in the cytoplasm. The catalysed reaction is 3-methyl-2-oxobutanoate + (6R)-5,10-methylene-5,6,7,8-tetrahydrofolate + H2O = 2-dehydropantoate + (6S)-5,6,7,8-tetrahydrofolate. The protein operates within cofactor biosynthesis; (R)-pantothenate biosynthesis; (R)-pantoate from 3-methyl-2-oxobutanoate: step 1/2. Catalyzes the reversible reaction in which hydroxymethyl group from 5,10-methylenetetrahydrofolate is transferred onto alpha-ketoisovalerate to form ketopantoate. The protein is 3-methyl-2-oxobutanoate hydroxymethyltransferase of Parabacteroides distasonis (strain ATCC 8503 / DSM 20701 / CIP 104284 / JCM 5825 / NCTC 11152).